The primary structure comprises 553 residues: Protein Early 65 kDa (553 aa).

It is found in the host cytoplasm. May participate in the recruitment of G-actin to the host nucleus. The protein is Protein Early 65 kDa (HE65) of Autographa californica nuclear polyhedrosis virus (AcMNPV).